We begin with the raw amino-acid sequence, 1458 residues long: Probable serine/threonine-protein kinase yakA (1458 aa).

Residues 32 to 76 (NNSLNSNDNTNTTNNNNNNNNNNNNNNNNNNNNNNNNNINNNNNN) are compositionally biased toward low complexity. The disordered stretch occupies residues 32–83 (NNSLNSNDNTNTTNNNNNNNNNNNNNNNNNNNNNNNNNINNNNNNGGMVGVN). The Protein kinase domain maps to 205–548 (YKVLDSLGQG…PMQAKEHPFI (344 aa)). Residues 211-219 (LGQGTFGQV) and lysine 234 each bind ATP. Residue aspartate 332 is the Proton acceptor of the active site. Disordered regions lie at residues 441–462 (HRHL…NGKP) and 545–571 (HPFI…TYSQ). Low complexity predominate over residues 446–459 (SNSDDNNNNNNNNN). Residues 588–643 (NQHQLFQQLQQQQQQQQQQQQQQQQQQQQQQQQQQQQQQHNQFQQQQQQQQQQQQS) are a coiled coil. Composition is skewed to low complexity over residues 659-709 (TPYT…SFNF), 791-800 (SWGSDSSSIS), 808-853 (QKQM…NNVN), and 861-870 (DIPSDSFSSS). 2 disordered regions span residues 659-714 (TPYT…NESF) and 791-874 (SWGS…EGMD). The stretch at 878 to 927 (NLYQQQQQQQQQQQQQQQQQQQQQQQQQQQQQQQQQQLQYQQQFQTLQDL) forms a coiled coil. 5 disordered regions span residues 930–1095 (EGEK…PQMI), 1128–1161 (NQQN…GGAI), 1233–1347 (DYRP…SYQY), 1375–1399 (QQQQ…KTSS), and 1435–1458 (QQLQ…YRET). Low complexity-rich tracts occupy residues 961-988 (QQTN…QQQQ), 1016-1042 (QQFQ…RFMQ), and 1064-1093 (QPLH…FTPQ). 2 stretches are compositionally biased toward polar residues: residues 1128–1158 (NQQN…NSSG) and 1233–1245 (DYRP…QSPP). Low complexity-rich tracts occupy residues 1246-1255 (SSYNSNKSFY) and 1264-1279 (NNNN…NFSN). Polar residues predominate over residues 1280 to 1291 (SLLPSQQQNVIF). The segment covering 1292 to 1309 (PQNSPPSSYNSSNSLSKS) has biased composition (low complexity). Polar residues-rich tracts occupy residues 1310–1321 (GGNTVKNNSNTG) and 1331–1344 (QRFN…SGGS). Coiled-coil stretches lie at residues 1346 to 1383 (QYQQ…KKDT) and 1409 to 1442 (RYQY…QQQA).

The protein belongs to the protein kinase superfamily. CMGC Ser/Thr protein kinase family. MNB/DYRK subfamily.

The protein localises to the cytoplasm. It carries out the reaction L-seryl-[protein] + ATP = O-phospho-L-seryl-[protein] + ADP + H(+). It catalyses the reaction L-threonyl-[protein] + ATP = O-phospho-L-threonyl-[protein] + ADP + H(+). The catalysed reaction is L-tyrosyl-[protein] + ATP = O-phospho-L-tyrosyl-[protein] + ADP + H(+). Functionally, general sensor of environmental conditions, such as heat stress, effecting changes through pkaC. Essential for survival to nitrosoative and oxidative stresses. Required for cell cycle control, not only at the onset but also during development (aggregation process and postaggregative development). The chain is Probable serine/threonine-protein kinase yakA (yakA) from Dictyostelium discoideum (Social amoeba).